Here is a 400-residue protein sequence, read N- to C-terminus: 2-[(L-alanin-3-ylcarbamoyl)methyl]-2-hydroxybutanedioate decarboxylase (400 aa).

Lys50 carries the N6-(pyridoxal phosphate)lysine modification. Residues Gly228 and 266 to 269 (ECGR) each bind pyridoxal 5'-phosphate. The active-site Proton donor is Cys344. Residue Tyr373 participates in pyridoxal 5'-phosphate binding.

This sequence belongs to the Orn/Lys/Arg decarboxylase class-II family. As to quaternary structure, homodimer. Pyridoxal 5'-phosphate is required as a cofactor.

The enzyme catalyses 2-[(L-alanin-3-ylcarbamoyl)methyl]-2-hydroxybutanedioate + H(+) = 2-[(2-aminoethylcarbamoyl)methyl]-2-hydroxybutanedioate + CO2. The protein operates within siderophore biosynthesis. In terms of biological role, catalyzes the decarboxylation of citryl-L-2,3-diaminopropionic acid to citryl-diaminoethane, the second step in staphyloferrin B biosynthesis. In Staphylococcus aureus (strain NCTC 8325 / PS 47), this protein is 2-[(L-alanin-3-ylcarbamoyl)methyl]-2-hydroxybutanedioate decarboxylase.